We begin with the raw amino-acid sequence, 180 residues long: Putative phycocyanobilin lyase CpcS 2 (180 aa).

It belongs to the CpcS/CpeS biliprotein lyase family.

In terms of biological role, covalently attaches a chromophore to Cys residue(s) of phycobiliproteins (Potential). In vitro does not act as a chromophore lyase for ApcA1, ApcA2, ApcB, ApcD, ApcF, CpcB or PecB, the lyase activity is therefore unsure. The chain is Putative phycocyanobilin lyase CpcS 2 (cpeS2) from Nostoc sp. (strain PCC 7120 / SAG 25.82 / UTEX 2576).